Here is a 114-residue protein sequence, read N- to C-terminus: Large ribosomal subunit protein bL19 (114 aa).

This sequence belongs to the bacterial ribosomal protein bL19 family.

This protein is located at the 30S-50S ribosomal subunit interface and may play a role in the structure and function of the aminoacyl-tRNA binding site. This Desulfatibacillum aliphaticivorans protein is Large ribosomal subunit protein bL19.